We begin with the raw amino-acid sequence, 479 residues long: Ribosomal RNA small subunit methyltransferase F (479 aa).

S-adenosyl-L-methionine contacts are provided by residues 125–131 (AAAPGSK), glutamate 149, aspartate 176, and aspartate 194. Cysteine 247 (nucleophile) is an active-site residue.

This sequence belongs to the class I-like SAM-binding methyltransferase superfamily. RsmB/NOP family.

The protein localises to the cytoplasm. It carries out the reaction cytidine(1407) in 16S rRNA + S-adenosyl-L-methionine = 5-methylcytidine(1407) in 16S rRNA + S-adenosyl-L-homocysteine + H(+). Functionally, specifically methylates the cytosine at position 1407 (m5C1407) of 16S rRNA. The chain is Ribosomal RNA small subunit methyltransferase F from Salmonella agona (strain SL483).